Here is a 125-residue protein sequence, read N- to C-terminus: Histone H2A (125 aa).

Basic residues predominate over residues 1–18 (MSGRGKGGKAKAKAKSRS). Positions 1-21 (MSGRGKGGKAKAKAKSRSSRA) are disordered. Ser-2 is subject to N-acetylserine. Residue Gln-104 is modified to N5-methylglutamine.

It belongs to the histone H2A family. The nucleosome is a histone octamer containing two molecules each of H2A, H2B, H3 and H4 assembled in one H3-H4 heterotetramer and two H2A-H2B heterodimers. The octamer wraps approximately 147 bp of DNA.

It localises to the nucleus. The protein resides in the chromosome. Its function is as follows. Core component of nucleosome. Nucleosomes wrap and compact DNA into chromatin, limiting DNA accessibility to the cellular machineries which require DNA as a template. Histones thereby play a central role in transcription regulation, DNA repair, DNA replication and chromosomal stability. DNA accessibility is regulated via a complex set of post-translational modifications of histones, also called histone code, and nucleosome remodeling. This Mytilus californianus (California mussel) protein is Histone H2A.